The chain runs to 344 residues: Selenide, water dikinase (344 aa).

U16 is an active-site residue. Position 16 (U16) is a non-standard amino acid, selenocysteine. ATP-binding positions include K19 and 46–48 (TND). Residue D49 coordinates Mg(2+). ATP contacts are provided by residues D66, D89, and 135-137 (GHT). Residue D89 coordinates Mg(2+). D223 contacts Mg(2+).

It belongs to the selenophosphate synthase 1 family. Class I subfamily. In terms of assembly, homodimer. Mg(2+) is required as a cofactor.

The catalysed reaction is hydrogenselenide + ATP + H2O = selenophosphate + AMP + phosphate + 2 H(+). Synthesizes selenophosphate from selenide and ATP. The polypeptide is Selenide, water dikinase (Caldanaerobacter subterraneus subsp. tengcongensis (strain DSM 15242 / JCM 11007 / NBRC 100824 / MB4) (Thermoanaerobacter tengcongensis)).